We begin with the raw amino-acid sequence, 20 residues long: Unknown protein NF019 from 2D-PAGE (20 aa).

This Naegleria fowleri (Brain eating amoeba) protein is Unknown protein NF019 from 2D-PAGE.